Here is a 65-residue protein sequence, read N- to C-terminus: Large ribosomal subunit protein bL35 (65 aa).

The segment covering 1–26 (MPKIKTHRGAAKRFSKTGTGKIKRSH) has biased composition (basic residues). A disordered region spans residues 1 to 41 (MPKIKTHRGAAKRFSKTGTGKIKRSHAFTSHILTSKTRKNK).

Belongs to the bacterial ribosomal protein bL35 family.

The sequence is that of Large ribosomal subunit protein bL35 from Geotalea daltonii (strain DSM 22248 / JCM 15807 / FRC-32) (Geobacter daltonii).